We begin with the raw amino-acid sequence, 313 residues long: Ribosomal RNA small subunit methyltransferase H (313 aa).

S-adenosyl-L-methionine is bound by residues 35–37 (GGH), D55, F80, D102, and Q109.

It belongs to the methyltransferase superfamily. RsmH family.

Its subcellular location is the cytoplasm. The catalysed reaction is cytidine(1402) in 16S rRNA + S-adenosyl-L-methionine = N(4)-methylcytidine(1402) in 16S rRNA + S-adenosyl-L-homocysteine + H(+). Functionally, specifically methylates the N4 position of cytidine in position 1402 (C1402) of 16S rRNA. The chain is Ribosomal RNA small subunit methyltransferase H from Shewanella oneidensis (strain ATCC 700550 / JCM 31522 / CIP 106686 / LMG 19005 / NCIMB 14063 / MR-1).